The following is a 93-amino-acid chain: Phosphoribosyl-ATP pyrophosphatase (93 aa).

The protein belongs to the PRA-PH family.

It localises to the cytoplasm. It catalyses the reaction 1-(5-phospho-beta-D-ribosyl)-ATP + H2O = 1-(5-phospho-beta-D-ribosyl)-5'-AMP + diphosphate + H(+). It participates in amino-acid biosynthesis; L-histidine biosynthesis; L-histidine from 5-phospho-alpha-D-ribose 1-diphosphate: step 2/9. This chain is Phosphoribosyl-ATP pyrophosphatase, found in Mycobacterium avium (strain 104).